Reading from the N-terminus, the 67-residue chain is DNA gyrase inhibitor YacG (67 aa).

Cysteine 9, cysteine 12, cysteine 28, and cysteine 32 together coordinate Zn(2+). The interval 48–67 (PVSPDAEDELFSEELPPRAH) is disordered.

It belongs to the DNA gyrase inhibitor YacG family. Interacts with GyrB. Zn(2+) serves as cofactor.

In terms of biological role, inhibits all the catalytic activities of DNA gyrase by preventing its interaction with DNA. Acts by binding directly to the C-terminal domain of GyrB, which probably disrupts DNA binding by the gyrase. The sequence is that of DNA gyrase inhibitor YacG from Pseudomonas fluorescens (strain ATCC BAA-477 / NRRL B-23932 / Pf-5).